Reading from the N-terminus, the 456-residue chain is Asparagine--tRNA ligase (456 aa).

Belongs to the class-II aminoacyl-tRNA synthetase family. As to quaternary structure, homodimer.

The protein resides in the cytoplasm. The catalysed reaction is tRNA(Asn) + L-asparagine + ATP = L-asparaginyl-tRNA(Asn) + AMP + diphosphate + H(+). In Mycoplasmoides gallisepticum (strain R(low / passage 15 / clone 2)) (Mycoplasma gallisepticum), this protein is Asparagine--tRNA ligase.